The following is a 161-amino-acid chain: Protein-export protein SecB (161 aa).

This sequence belongs to the SecB family. In terms of assembly, homotetramer, a dimer of dimers. One homotetramer interacts with 1 SecA dimer.

The protein localises to the cytoplasm. In terms of biological role, one of the proteins required for the normal export of preproteins out of the cell cytoplasm. It is a molecular chaperone that binds to a subset of precursor proteins, maintaining them in a translocation-competent state. It also specifically binds to its receptor SecA. The protein is Protein-export protein SecB of Shewanella baltica (strain OS155 / ATCC BAA-1091).